The sequence spans 140 residues: Resuscitation-promoting factor RpfC (140 aa).

Residues 1-31 (MTRIAKPLIKSAMAAGLVTASMSLSTAVAHA) form the signal peptide.

Belongs to the transglycosylase family. Rpf subfamily.

Its subcellular location is the secreted. In terms of biological role, factor that stimulates resuscitation of dormant cells. Has peptidoglycan (PG) hydrolytic activity. The sequence is that of Resuscitation-promoting factor RpfC (rpfC) from Mycobacterium tuberculosis (strain ATCC 35801 / TMC 107 / Erdman).